Consider the following 340-residue polypeptide: MNLDQKGLKKRSMTVAYFFENISKSLDIKLRRLNEVDEQKRRIFERDLHRPGLALAGFTNLFTYKRVQILGNTETRFLNHLEDDDRKRAFESLIKFKLPCIILTSNNKLEPELLDMATRAGVPVFVTRHSSTKTIYLLTDFLDDQFSQYQQFHGSMVDVYGVGVMLIGNSGLGKSEVALDLVERGHRLVADDAVVINRKGENVLIASGNEIVDHFMEIRGLGVVDVKAIFGIRAIRDKKVVQVVVELLEWNEESDYERLGLDTKTTKILGVDIPLIQLPINPGKNITVIIEVVALNYLLKHYSGYVAAEALEQRIKRVITNESLKKSGKGRTYLAKDYEE.

Catalysis depends on residues H153 and K174. Position 168–175 (168–175 (GNSGLGKS)) interacts with ATP. A Mg(2+)-binding site is contributed by S175. Catalysis depends on D192, which acts as the Proton acceptor; for phosphorylation activity. Proton donor; for dephosphorylation activity. The tract at residues 216–225 (MEIRGLGVVD) is important for the catalytic mechanism of both phosphorylation and dephosphorylation. Position 217 (E217) interacts with Mg(2+). R258 is a catalytic residue. The important for the catalytic mechanism of dephosphorylation stretch occupies residues 279 to 284 (PINPGK).

Belongs to the HPrK/P family. Homohexamer. Requires Mg(2+) as cofactor.

The enzyme catalyses [HPr protein]-L-serine + ATP = [HPr protein]-O-phospho-L-serine + ADP + H(+). The catalysed reaction is [HPr protein]-O-phospho-L-serine + phosphate + H(+) = [HPr protein]-L-serine + diphosphate. Functionally, catalyzes the ATP- as well as the pyrophosphate-dependent phosphorylation of a specific serine residue in HPr, a phosphocarrier protein of the phosphoenolpyruvate-dependent sugar phosphotransferase system (PTS). HprK/P also catalyzes the pyrophosphate-producing, inorganic phosphate-dependent dephosphorylation (phosphorolysis) of seryl-phosphorylated HPr (P-Ser-HPr). The chain is HPr kinase/phosphorylase from Prosthecochloris aestuarii (strain DSM 271 / SK 413).